The primary structure comprises 336 residues: UDP-N-acetylenolpyruvoylglucosamine reductase (336 aa).

Positions 17 to 188 (GFDVRARYAS…TAVTLRLSRD (172 aa)) constitute an FAD-binding PCMH-type domain. The active site involves R164. S236 (proton donor) is an active-site residue. The active site involves E332.

This sequence belongs to the MurB family. FAD is required as a cofactor.

Its subcellular location is the cytoplasm. The catalysed reaction is UDP-N-acetyl-alpha-D-muramate + NADP(+) = UDP-N-acetyl-3-O-(1-carboxyvinyl)-alpha-D-glucosamine + NADPH + H(+). The protein operates within cell wall biogenesis; peptidoglycan biosynthesis. Functionally, cell wall formation. This Cupriavidus pinatubonensis (strain JMP 134 / LMG 1197) (Cupriavidus necator (strain JMP 134)) protein is UDP-N-acetylenolpyruvoylglucosamine reductase.